Here is a 121-residue protein sequence, read N- to C-terminus: Small ribosomal subunit protein uS13 (121 aa).

Residues 91–121 form a disordered region; sequence HRMSLPVRGQRTRTNARTRRGSRKTVAGRKK. Positions 100-121 are enriched in basic residues; sequence QRTRTNARTRRGSRKTVAGRKK.

The protein belongs to the universal ribosomal protein uS13 family. In terms of assembly, part of the 30S ribosomal subunit. Forms a loose heterodimer with protein S19. Forms two bridges to the 50S subunit in the 70S ribosome.

Functionally, located at the top of the head of the 30S subunit, it contacts several helices of the 16S rRNA. In the 70S ribosome it contacts the 23S rRNA (bridge B1a) and protein L5 of the 50S subunit (bridge B1b), connecting the 2 subunits; these bridges are implicated in subunit movement. Contacts the tRNAs in the A and P-sites. This chain is Small ribosomal subunit protein uS13, found in Prochlorococcus marinus (strain MIT 9312).